The sequence spans 98 residues: DNA-binding protein HU (98 aa).

The protein belongs to the bacterial histone-like protein family. As to quaternary structure, homodimer.

Its function is as follows. Histone-like DNA-binding protein which is capable of wrapping DNA to stabilize it, and thus to prevent its denaturation under extreme environmental conditions. In Campylobacter jejuni subsp. jejuni serotype O:2 (strain ATCC 700819 / NCTC 11168), this protein is DNA-binding protein HU (hup).